We begin with the raw amino-acid sequence, 435 residues long: 3-ketoacyl-CoA thiolase (435 aa).

The active-site Acyl-thioester intermediate is C98. Catalysis depends on proton acceptor residues H391 and C421.

The protein belongs to the thiolase-like superfamily. Thiolase family. As to quaternary structure, heterotetramer of two alpha chains (FadJ) and two beta chains (FadI).

The protein localises to the cytoplasm. The catalysed reaction is an acyl-CoA + acetyl-CoA = a 3-oxoacyl-CoA + CoA. Its pathway is lipid metabolism; fatty acid beta-oxidation. In terms of biological role, catalyzes the final step of fatty acid oxidation in which acetyl-CoA is released and the CoA ester of a fatty acid two carbons shorter is formed. This is 3-ketoacyl-CoA thiolase from Vibrio vulnificus (strain YJ016).